A 103-amino-acid polypeptide reads, in one-letter code: Co-chaperonin GroES (103 aa).

It belongs to the GroES chaperonin family. Heptamer of 7 subunits arranged in a ring. Interacts with the chaperonin GroEL.

It localises to the cytoplasm. Together with the chaperonin GroEL, plays an essential role in assisting protein folding. The GroEL-GroES system forms a nano-cage that allows encapsulation of the non-native substrate proteins and provides a physical environment optimized to promote and accelerate protein folding. GroES binds to the apical surface of the GroEL ring, thereby capping the opening of the GroEL channel. The chain is Co-chaperonin GroES from Prochlorococcus marinus (strain SARG / CCMP1375 / SS120).